Consider the following 95-residue polypeptide: Aspartyl/glutamyl-tRNA(Asn/Gln) amidotransferase subunit C (95 aa).

It belongs to the GatC family. In terms of assembly, heterotrimer of A, B and C subunits.

It carries out the reaction L-glutamyl-tRNA(Gln) + L-glutamine + ATP + H2O = L-glutaminyl-tRNA(Gln) + L-glutamate + ADP + phosphate + H(+). The catalysed reaction is L-aspartyl-tRNA(Asn) + L-glutamine + ATP + H2O = L-asparaginyl-tRNA(Asn) + L-glutamate + ADP + phosphate + 2 H(+). Functionally, allows the formation of correctly charged Asn-tRNA(Asn) or Gln-tRNA(Gln) through the transamidation of misacylated Asp-tRNA(Asn) or Glu-tRNA(Gln) in organisms which lack either or both of asparaginyl-tRNA or glutaminyl-tRNA synthetases. The reaction takes place in the presence of glutamine and ATP through an activated phospho-Asp-tRNA(Asn) or phospho-Glu-tRNA(Gln). This is Aspartyl/glutamyl-tRNA(Asn/Gln) amidotransferase subunit C from Acidiphilium cryptum (strain JF-5).